The following is a 184-amino-acid chain: GTP cyclohydrolase 1 (184 aa).

Positions 75, 78, and 146 each coordinate Zn(2+).

It belongs to the GTP cyclohydrolase I family. As to quaternary structure, homomer.

The enzyme catalyses GTP + H2O = 7,8-dihydroneopterin 3'-triphosphate + formate + H(+). Its pathway is cofactor biosynthesis; 7,8-dihydroneopterin triphosphate biosynthesis; 7,8-dihydroneopterin triphosphate from GTP: step 1/1. The protein is GTP cyclohydrolase 1 of Streptococcus pneumoniae serotype 19F (strain G54).